A 1562-amino-acid chain; its full sequence is Pikromycin polyketide synthase component PikAIII (1562 aa).

The Ketosynthase family 3 (KS3) domain occupies 34-464 (HEPVAIVGMA…GTNAHVVLEE (431 aa)). The segment at 37-1475 (VAIVGMACRL…TPAALAAHLH (1439 aa)) is module 5. Cysteine 209 serves as the catalytic Acyl-thioester intermediate; for beta-ketoacyl synthase activity. Residues histidine 344 and histidine 384 each act as for beta-ketoacyl synthase activity in the active site. The segment at 565–866 (FVFPGQGTQW…GGQERLVTSL (302 aa)) is acyltransferase. The active-site Acyl-ester intermediate; for acyltransferase activity is the serine 655. A beta-ketoacyl reductase region spans residues 1116–1293 (GTVLITGGTG…ATSVAWGLWA (178 aa)). NADP(+) is bound by residues 1124–1127 (TGAL), 1147–1150 (SRSG), 1176–1177 (DV), lysine 1226, and 1248–1249 (YS). Tyrosine 1263 (acyl-ester intermediate; for beta-ketoacyl reductase activity) is an active-site residue. The Carrier domain occupies 1403 to 1478 (PALLTLVRTH…ALAAHLHEAY (76 aa)). O-(pantetheine 4'-phosphoryl)serine is present on serine 1438. Positions 1519–1548 (GIEPEPGSGGSDGGAADPGAEPEASIDDLD) are disordered. A compositionally biased stretch (low complexity) spans 1532 to 1541 (GAADPGAEPE).

As to quaternary structure, homodimer. Pikromycin PKS consists of a combination of multimodular (PikAI and PikAII) and monomodular (PikAIII and PikAIV) polypeptides each coding for a functional synthase subunit which participates in 1 (monomodular) or 2 (multimodular) of the six FAS-like elongation steps required for formation of the polyketide. Module 1, 2, 3, 4, 5, and 6 participating in biosynthesis steps 1, 2, 3, 4, 5, and 6, respectively. Pantetheine 4'-phosphate is required as a cofactor.

It catalyses the reaction 5 (S)-methylmalonyl-CoA + malonyl-CoA + 5 NADPH + 11 H(+) = 10-deoxymethynolide + 6 CO2 + 5 NADP(+) + 6 CoA + 2 H2O. The enzyme catalyses 6 (S)-methylmalonyl-CoA + malonyl-CoA + 5 NADPH + 12 H(+) = narbonolide + 7 CO2 + 5 NADP(+) + 7 CoA + 2 H2O. Its pathway is antibiotic biosynthesis. Functionally, involved in the biosynthesis of 12- and 14-membered ring macrolactone antibiotics such as methymycin and neomethymycin, and pikromycin and narbomycin, respectively. Component of the pikromycin PKS which catalyzes the biosynthesis of both precursors 10-deoxymethynolide (12-membered ring macrolactone) and narbonolide (14-membered ring macrolactone). Chain elongation through PikAI, PikAII and PikAIII followed by thioesterase catalyzed termination results in the production of 10-deoxymethynolide, while continued elongation through PikAIV, followed by thioesterase (TE) catalyzed cyclization results in the biosynthesis of the narbonolide. In Streptomyces venezuelae, this protein is Pikromycin polyketide synthase component PikAIII.